The sequence spans 158 residues: Mitotic-spindle organizing protein 2B (158 aa).

Phosphoserine is present on Ser-34. The tract at residues 84–158 is disordered; the sequence is RLASEPQDPA…PGKSPTRGST (75 aa). A compositionally biased stretch (low complexity) spans 111-122; the sequence is GSAALGGALALA. Residues 128-140 are compositionally biased toward polar residues; it reads EGSSQRMPRQPSA. Ser-152 bears the Phosphoserine mark.

It belongs to the MOZART2 family. As to quaternary structure, associates with the gamma-tubulin ring complex (gTuRC) consisting of TUBGCP2, TUBGCP3, TUBGCP4, TUBGCP5 and TUBGCP6 and gamma-tubulin TUBG1 or TUBG2; within the complex, interacts with TUBGCP2; the interaction plays a role in gTuRC activation. Interacts with TUBG1.

Its subcellular location is the cytoplasm. It localises to the cytoskeleton. It is found in the microtubule organizing center. The protein localises to the centrosome. The protein resides in the spindle. Functionally, required for the recruitment and the assembly of the gamma-tubulin ring complex (gTuRC) at the centrosome. The gTuRC regulates the minus-end nucleation of alpha-beta tubulin heterodimers that grow into microtubule protafilaments, a critical step in centrosome duplication and spindle formation. The protein is Mitotic-spindle organizing protein 2B (MZT2B) of Homo sapiens (Human).